Reading from the N-terminus, the 408-residue chain is MSWDQVWIDVNVATMDPSISAPYGAITNAAIAVKDGKIAWLGPRSELPAFDVLSIPVYRGKGGWITPGLIDAHTHLVFAGNRANEFELRLKGATYEEIARAGGGIISTVNACREADEAELFDLGRQRLNALAKEGVTTVEIKSGYGLDTETELKILRVARELGQHHHVDVKTTFLGAHAVPPEFKDNSDGYVDLIINKMLPAVIAENLADAVDVFCENIAFNLEQTERVLSAAKAAGLQVKLHAEQLSNMGGSELAARLGAKSVDHIEYLDEAGVKALSESGTCAVLLPGAFYFLRETQKPPIDLLRQYGVPMVLASDFNPGSSPICSTLLMLNMGCTLFRLTPEEALAGLTLNAAKALGIEENVGSLVVGKQADFCLWDIATPAQLAYSYGVNPCKDVVKNGKLVHQ.

Positions 73 and 75 each coordinate Fe(3+). Residues His-73 and His-75 each coordinate Zn(2+). The 4-imidazolone-5-propanoate site is built by Arg-82, Tyr-145, and His-178. Tyr-145 is an N-formimidoyl-L-glutamate binding site. His-243 is a binding site for Fe(3+). Residue His-243 coordinates Zn(2+). Gln-246 is a binding site for 4-imidazolone-5-propanoate. Asp-318 serves as a coordination point for Fe(3+). Asp-318 lines the Zn(2+) pocket. N-formimidoyl-L-glutamate is bound by residues Asn-320 and Gly-322. Ser-323 serves as a coordination point for 4-imidazolone-5-propanoate.

It belongs to the metallo-dependent hydrolases superfamily. HutI family. Zn(2+) is required as a cofactor. It depends on Fe(3+) as a cofactor.

It is found in the cytoplasm. It carries out the reaction 4-imidazolone-5-propanoate + H2O = N-formimidoyl-L-glutamate. Its pathway is amino-acid degradation; L-histidine degradation into L-glutamate; N-formimidoyl-L-glutamate from L-histidine: step 3/3. Catalyzes the hydrolytic cleavage of the carbon-nitrogen bond in imidazolone-5-propanoate to yield N-formimidoyl-L-glutamate. It is the third step in the universal histidine degradation pathway. This Shewanella sp. (strain MR-4) protein is Imidazolonepropionase.